The following is a 122-amino-acid chain: Histone H2B.1 (122 aa).

A compositionally biased stretch (low complexity) spans 1–10; it reads MAPKKAPAAA. Residues 1-28 form a disordered region; it reads MAPKKAPAAAAEKKVKKAPTTEKKNKKK. Alanine 2 is modified (n,N,N-trimethylalanine). An N6-acetyllysine mark is found at lysine 5 and lysine 42. Lysine 116 participates in a covalent cross-link: Glycyl lysine isopeptide (Lys-Gly) (interchain with G-Cter in ubiquitin).

This sequence belongs to the histone H2B family. As to quaternary structure, the nucleosome is a histone octamer containing two molecules each of H2A, H2B, H3 and H4 assembled in one H3-H4 heterotetramer and two H2A-H2B heterodimers. The octamer wraps approximately 147 bp of DNA. Acetylation occurs almost exclusively in the MAC. In terms of processing, monoubiquitination to form H2BK115ub1 gives a specific tag for epigenetic transcriptional activation and is also prerequisite for H3K4me and H3K79me formation.

The protein resides in the nucleus. It is found in the chromosome. Its function is as follows. Core component of nucleosome. Nucleosomes wrap and compact DNA into chromatin, limiting DNA accessibility to the cellular machineries which require DNA as a template. Histones thereby play a central role in transcription regulation, DNA repair, DNA replication and chromosomal stability. DNA accessibility is regulated via a complex set of post-translational modifications of histones, also called histone code, and nucleosome remodeling. The chain is Histone H2B.1 (HTB1) from Tetrahymena thermophila (strain SB210).